The following is a 307-amino-acid chain: Pantothenate kinase (307 aa).

An ATP-binding site is contributed by 87-94; it reads GSVAVGKS.

Belongs to the prokaryotic pantothenate kinase family.

The protein resides in the cytoplasm. It catalyses the reaction (R)-pantothenate + ATP = (R)-4'-phosphopantothenate + ADP + H(+). It functions in the pathway cofactor biosynthesis; coenzyme A biosynthesis; CoA from (R)-pantothenate: step 1/5. This Vibrio vulnificus (strain YJ016) protein is Pantothenate kinase.